Consider the following 495-residue polypeptide: Serine/threonine protein phosphatase 2A 57 kDa regulatory subunit B' alpha isoform (495 aa).

Positions 1–13 (MFKKIMKGANRKA) are enriched in basic residues. Disordered stretches follow at residues 1–61 (MFKK…AATT) and 462–495 (QAKSKQVEEQRQNRWRRLDEAVEEREREDPMITS). Residues 49–61 (VPSSPNSMAAATT) show a composition bias toward polar residues.

This sequence belongs to the phosphatase 2A regulatory subunit B56 family. As to quaternary structure, PP2A consists of a common heteromeric enzyme, composed of a catalytic subunit (subunits C), a constant regulatory subunit (subunit A), and a variety of regulatory subunits such as subunits B (the R2/B/PR55/B55, R3/B''/PR72/PR130/PR59 and R5/B'/B56 families). Interacts with BZR1. Interacts with BRI1. Interacts with SRK2E/OST1. In terms of tissue distribution, expressed ubiquitously, higher levels in leaves.

Its subcellular location is the nucleus. The protein localises to the cytoplasm. The B regulatory subunit may modulate substrate selectivity and catalytic activity, and may also direct the localization of the catalytic enzyme to a particular subcellular compartment. Required for the formation of the PP2A holoenzyme that positively regulates brassinosteroid signaling by dephosphorylating and activating BZR1. This chain is Serine/threonine protein phosphatase 2A 57 kDa regulatory subunit B' alpha isoform (B'ALPHA), found in Arabidopsis thaliana (Mouse-ear cress).